A 480-amino-acid polypeptide reads, in one-letter code: Protein nucleotidyltransferase YdiU (480 aa).

8 residues coordinate ATP: glycine 86, glycine 88, arginine 89, lysine 109, aspartate 121, glycine 122, arginine 172, and arginine 179. Aspartate 248 acts as the Proton acceptor in catalysis. Residues asparagine 249 and aspartate 258 each contribute to the Mg(2+) site. Residue aspartate 258 coordinates ATP.

The protein belongs to the SELO family. Mg(2+) is required as a cofactor. Requires Mn(2+) as cofactor.

The enzyme catalyses L-seryl-[protein] + ATP = 3-O-(5'-adenylyl)-L-seryl-[protein] + diphosphate. It catalyses the reaction L-threonyl-[protein] + ATP = 3-O-(5'-adenylyl)-L-threonyl-[protein] + diphosphate. It carries out the reaction L-tyrosyl-[protein] + ATP = O-(5'-adenylyl)-L-tyrosyl-[protein] + diphosphate. The catalysed reaction is L-histidyl-[protein] + UTP = N(tele)-(5'-uridylyl)-L-histidyl-[protein] + diphosphate. The enzyme catalyses L-seryl-[protein] + UTP = O-(5'-uridylyl)-L-seryl-[protein] + diphosphate. It catalyses the reaction L-tyrosyl-[protein] + UTP = O-(5'-uridylyl)-L-tyrosyl-[protein] + diphosphate. In terms of biological role, nucleotidyltransferase involved in the post-translational modification of proteins. It can catalyze the addition of adenosine monophosphate (AMP) or uridine monophosphate (UMP) to a protein, resulting in modifications known as AMPylation and UMPylation. The chain is Protein nucleotidyltransferase YdiU from Salmonella paratyphi C (strain RKS4594).